Here is a 404-residue protein sequence, read N- to C-terminus: Probable ribosomal oxygenase HI_0396 (404 aa).

Residues 102–231 enclose the JmjC domain; that stretch reads ELGQLWNKFG…LIDGISKGFC (130 aa). Residues His-135, Asp-137, and His-199 each coordinate Fe cation.

It belongs to the ROX family. Requires Fe(2+) as cofactor.

Its function is as follows. Oxygenase that catalyzes the hydroxylation of a ribosomal protein. This chain is Probable ribosomal oxygenase HI_0396, found in Haemophilus influenzae (strain ATCC 51907 / DSM 11121 / KW20 / Rd).